The chain runs to 515 residues: Vacuolar fusion protein CCZ1 homolog A (515 aa).

The protein belongs to the CCZ1 family. As to quaternary structure, interacts with MON1.

The protein resides in the endosome. It localises to the prevacuolar compartment. Its function is as follows. Plays an important role in membrane trafficking through the secretory apparatus. In complex with MON1, acts as a guanine exchange factor (GEF) for RABG3F of the Rab7 protein family. Promotes the exchange of GDP to GTP, converting RABG3F from an inactive GDP-bound form into an active GTP-bound form. The RABG3F active form is involved in protein trafficking from prevacuolar compartments (PVCs) to vacuoles. May serve as a linker between Rab5 and Rab7 protein families in PVCs and mediate PVC maturation. The protein is Vacuolar fusion protein CCZ1 homolog A of Arabidopsis thaliana (Mouse-ear cress).